Reading from the N-terminus, the 499-residue chain is UDP-N-acetylmuramoyl-L-alanyl-D-glutamate--2,6-diaminopimelate ligase (499 aa).

Serine 32 contributes to the UDP-N-acetyl-alpha-D-muramoyl-L-alanyl-D-glutamate binding site. 117–123 lines the ATP pocket; the sequence is GTNGKTT. Residues 159-160, serine 186, glutamine 192, and arginine 194 each bind UDP-N-acetyl-alpha-D-muramoyl-L-alanyl-D-glutamate; that span reads TT. Lysine 226 bears the N6-carboxylysine mark. Meso-2,6-diaminopimelate contacts are provided by residues arginine 394, 418–421, glycine 469, and glutamate 473; that span reads DNPR. Positions 418-421 match the Meso-diaminopimelate recognition motif motif; that stretch reads DNPR.

Belongs to the MurCDEF family. MurE subfamily. Requires Mg(2+) as cofactor. In terms of processing, carboxylation is probably crucial for Mg(2+) binding and, consequently, for the gamma-phosphate positioning of ATP.

It is found in the cytoplasm. The enzyme catalyses UDP-N-acetyl-alpha-D-muramoyl-L-alanyl-D-glutamate + meso-2,6-diaminopimelate + ATP = UDP-N-acetyl-alpha-D-muramoyl-L-alanyl-gamma-D-glutamyl-meso-2,6-diaminopimelate + ADP + phosphate + H(+). The protein operates within cell wall biogenesis; peptidoglycan biosynthesis. Its function is as follows. Catalyzes the addition of meso-diaminopimelic acid to the nucleotide precursor UDP-N-acetylmuramoyl-L-alanyl-D-glutamate (UMAG) in the biosynthesis of bacterial cell-wall peptidoglycan. This is UDP-N-acetylmuramoyl-L-alanyl-D-glutamate--2,6-diaminopimelate ligase from Synechococcus sp. (strain WH7803).